The following is a 173-amino-acid chain: Shikimate kinase 1 (173 aa).

14-19 (GAGKST) contacts ATP. Ser-18 serves as a coordination point for Mg(2+). Substrate-binding residues include Asp-36, Arg-60, and Gly-82. Arg-120 lines the ATP pocket. Position 140 (Arg-140) interacts with substrate. Residue Gln-157 participates in ATP binding.

This sequence belongs to the shikimate kinase family. In terms of assembly, monomer. The cofactor is Mg(2+).

Its subcellular location is the cytoplasm. It catalyses the reaction shikimate + ATP = 3-phosphoshikimate + ADP + H(+). It functions in the pathway metabolic intermediate biosynthesis; chorismate biosynthesis; chorismate from D-erythrose 4-phosphate and phosphoenolpyruvate: step 5/7. Its function is as follows. Catalyzes the specific phosphorylation of the 3-hydroxyl group of shikimic acid using ATP as a cosubstrate. The sequence is that of Shikimate kinase 1 from Shigella boydii serotype 18 (strain CDC 3083-94 / BS512).